Reading from the N-terminus, the 305-residue chain is Thioredoxin reductase (305 aa).

28–35 (LGIETSSQ) is an FAD binding site. A disulfide bridge links C129 with C132. Position 272–281 (272–281 (DCCDWIYRQA)) interacts with FAD.

Belongs to the class-II pyridine nucleotide-disulfide oxidoreductase family. In terms of assembly, homodimer. It depends on FAD as a cofactor.

It localises to the cytoplasm. The catalysed reaction is [thioredoxin]-dithiol + NADP(+) = [thioredoxin]-disulfide + NADPH + H(+). The chain is Thioredoxin reductase (TRXB) from Spironucleus barkhanus.